Reading from the N-terminus, the 128-residue chain is Small ribosomal subunit protein eS6 (128 aa).

Belongs to the eukaryotic ribosomal protein eS6 family.

This is Small ribosomal subunit protein eS6 from Methanobrevibacter smithii (strain ATCC 35061 / DSM 861 / OCM 144 / PS).